A 189-amino-acid chain; its full sequence is Rho-related protein racM (189 aa).

12–19 (GDYGVGKT) is a binding site for GTP. The Effector region motif lies at 35-43 (YVPTALDNF). Residues 60–64 (DTAGG) and 118–121 (TKID) each bind GTP. Residue C186 is modified to Cysteine methyl ester. C186 carries the S-geranylgeranyl cysteine lipid modification. A propeptide spans 187-189 (IIL) (removed in mature form).

The protein belongs to the small GTPase superfamily. Rho family.

It localises to the cell membrane. The chain is Rho-related protein racM (racM) from Dictyostelium discoideum (Social amoeba).